The chain runs to 147 residues: Arginine vasopressin-induced protein 1 (147 aa).

Disordered regions lie at residues 1–24 (MGTPASVVSEPPPWQAPIEARGRK) and 104–147 (LANP…QIRH). The span at 105–119 (ANPQSATETASSEQY) shows a compositional bias: polar residues. Positions 121–134 (HSRKKSARIRRNWR) are enriched in basic residues. The segment covering 137–147 (GPTSYLHQIRH) has biased composition (polar residues).

May be involved in MAP kinase activation, epithelial sodium channel (ENaC) down-regulation and cell cycling. This Homo sapiens (Human) protein is Arginine vasopressin-induced protein 1 (AVPI1).